We begin with the raw amino-acid sequence, 34 residues long: MTYHKVSPDGRMSKEKENFFRYRNQLIVLNRYMH.

This is an uncharacterized protein from Haemophilus influenzae (strain ATCC 51907 / DSM 11121 / KW20 / Rd).